We begin with the raw amino-acid sequence, 231 residues long: Large ribosomal subunit protein uL1 (231 aa).

Belongs to the universal ribosomal protein uL1 family. As to quaternary structure, part of the 50S ribosomal subunit.

Its function is as follows. Binds directly to 23S rRNA. The L1 stalk is quite mobile in the ribosome, and is involved in E site tRNA release. In terms of biological role, protein L1 is also a translational repressor protein, it controls the translation of the L11 operon by binding to its mRNA. The polypeptide is Large ribosomal subunit protein uL1 (Chlorobaculum tepidum (strain ATCC 49652 / DSM 12025 / NBRC 103806 / TLS) (Chlorobium tepidum)).